Here is a 518-residue protein sequence, read N- to C-terminus: ORC1-type DNA replication protein 7 (518 aa).

Position 94–98 (94–98) interacts with ATP; the sequence is TGKTA. The segment at 165–196 is disordered; it reads DDDPNALEIGGSPGDDRTGNESSEGSDVSDSF. The span at 186–196 shows a compositional bias: low complexity; it reads SSEGSDVSDSF. ATP is bound by residues Tyr318 and Arg330.

The protein belongs to the CDC6/cdc18 family.

Its function is as follows. Involved in regulation of DNA replication. Required to initiate DNA replication of the circular chromosome at a nearby autonomously replicating sequence (ARS) oriC1. The sequence is that of ORC1-type DNA replication protein 7 (orc7) from Halobacterium salinarum (strain ATCC 700922 / JCM 11081 / NRC-1) (Halobacterium halobium).